We begin with the raw amino-acid sequence, 98 residues long: NADH-ubiquinone oxidoreductase chain 4L (98 aa).

Helical transmembrane passes span 1-21, 27-47, and 61-81; these read MTPT…GMLT, VASL…ATLI, and IILL…LISI.

The protein belongs to the complex I subunit 4L family. As to quaternary structure, core subunit of respiratory chain NADH dehydrogenase (Complex I) which is composed of 45 different subunits.

It is found in the mitochondrion inner membrane. It catalyses the reaction a ubiquinone + NADH + 5 H(+)(in) = a ubiquinol + NAD(+) + 4 H(+)(out). Its function is as follows. Core subunit of the mitochondrial membrane respiratory chain NADH dehydrogenase (Complex I) which catalyzes electron transfer from NADH through the respiratory chain, using ubiquinone as an electron acceptor. Part of the enzyme membrane arm which is embedded in the lipid bilayer and involved in proton translocation. This Macaca fascicularis (Crab-eating macaque) protein is NADH-ubiquinone oxidoreductase chain 4L (MT-ND4L).